An 883-amino-acid chain; its full sequence is Translation initiation factor IF-2 (883 aa).

Disordered regions lie at residues 53–90 (RSHGKPEQAPEETDQSAKKITLNRRKQQEVTVNSGRSK) and 171–294 (EEAA…FERP). A compositionally biased stretch (polar residues) spans 81 to 90 (EVTVNSGRSK). Residues 172–185 (EAAAAAKAAEALAA) show a composition bias toward low complexity. A compositionally biased stretch (basic and acidic residues) spans 221–238 (RSDDRNNRSAPRNERGPG). Residues 256-265 (GNSNNSNNRG) are compositionally biased toward low complexity. The region spanning 382–551 (QRPPVVTIMG…SVQAELLELK (170 aa)) is the tr-type G domain. A G1 region spans residues 391–398 (GHVDHGKT). A GTP-binding site is contributed by 391 to 398 (GHVDHGKT). The segment at 416–420 (GITQH) is G2. The interval 437–440 (DTPG) is G3. GTP is bound by residues 437-441 (DTPGH) and 491-494 (NKID). The G4 stretch occupies residues 491 to 494 (NKID). The interval 527-529 (SAK) is G5.

The protein belongs to the TRAFAC class translation factor GTPase superfamily. Classic translation factor GTPase family. IF-2 subfamily.

It localises to the cytoplasm. Its function is as follows. One of the essential components for the initiation of protein synthesis. Protects formylmethionyl-tRNA from spontaneous hydrolysis and promotes its binding to the 30S ribosomal subunits. Also involved in the hydrolysis of GTP during the formation of the 70S ribosomal complex. In Stenotrophomonas maltophilia (strain R551-3), this protein is Translation initiation factor IF-2.